The primary structure comprises 100 residues: MATLADPRDIILAPVISEKSYGLLDDNVYTFLVRPDSNKTQIKIAVEKIFAVKVASVNTANRQGKRKRTRTGYGKRKSTKRAIVTLAPGSRPIDLFGAPA.

This sequence belongs to the universal ribosomal protein uL23 family. As to quaternary structure, part of the 50S ribosomal subunit. Contacts protein L29, and trigger factor when it is bound to the ribosome.

One of the early assembly proteins it binds 23S rRNA. One of the proteins that surrounds the polypeptide exit tunnel on the outside of the ribosome. Forms the main docking site for trigger factor binding to the ribosome. The chain is Large ribosomal subunit protein uL23 from Mycobacterium tuberculosis (strain ATCC 25177 / H37Ra).